The primary structure comprises 417 residues: Serine hydroxymethyltransferase (417 aa).

(6S)-5,6,7,8-tetrahydrofolate is bound by residues Leu-112 and 116-118 (GHL). The residue at position 221 (Lys-221) is an N6-(pyridoxal phosphate)lysine. A (6S)-5,6,7,8-tetrahydrofolate-binding site is contributed by Glu-247.

This sequence belongs to the SHMT family. In terms of assembly, homodimer. Requires pyridoxal 5'-phosphate as cofactor.

It localises to the cytoplasm. It carries out the reaction (6R)-5,10-methylene-5,6,7,8-tetrahydrofolate + glycine + H2O = (6S)-5,6,7,8-tetrahydrofolate + L-serine. The protein operates within one-carbon metabolism; tetrahydrofolate interconversion. Its pathway is amino-acid biosynthesis; glycine biosynthesis; glycine from L-serine: step 1/1. In terms of biological role, catalyzes the reversible interconversion of serine and glycine with tetrahydrofolate (THF) serving as the one-carbon carrier. This reaction serves as the major source of one-carbon groups required for the biosynthesis of purines, thymidylate, methionine, and other important biomolecules. Also exhibits THF-independent aldolase activity toward beta-hydroxyamino acids, producing glycine and aldehydes, via a retro-aldol mechanism. In Borreliella afzelii (strain PKo) (Borrelia afzelii), this protein is Serine hydroxymethyltransferase.